We begin with the raw amino-acid sequence, 480 residues long: Voltage-gated potassium channel regulatory subunit KCNG2 (480 aa).

Disordered regions lie at residues M1 to G25 and A144 to G167. Residues M1–L187 lie on the Cytoplasmic side of the membrane. Residues A188 to L209 form a helical membrane-spanning segment. At S210–N230 the chain is on the extracellular side. The helical transmembrane segment at L231–Q252 threads the bilayer. The Cytoplasmic segment spans residues A253–P263. The helical transmembrane segment at L264 to A284 threads the bilayer. Residues A285–A296 are Extracellular-facing. The chain crosses the membrane as a helical; Voltage-sensor span at residues G297–H317. Residues S318–A332 are Cytoplasmic-facing. The helical transmembrane segment at R333–H354 threads the bilayer. The Extracellular segment spans residues L355 to V369. The segment at residues P370 to T381 is an intramembrane region (helical). Residues T382–D387 carry the Selectivity filter motif. Residues T382–V389 lie within the membrane without spanning it. Topologically, residues P390–Q396 are extracellular. Residues V397–Y425 form a helical membrane-spanning segment. Residues S426–P480 lie on the Cytoplasmic side of the membrane. Residues K429–P480 form a disordered region. The segment covering V441–T452 has biased composition (basic and acidic residues).

The protein belongs to the potassium channel family. G (TC 1.A.1.2) subfamily. Kv6.2/KCNG2 sub-subfamily. Heterodimer with KCNB1. In terms of tissue distribution, highly expressed in heart, in particular in right and left atrium, and detected at lower levels in the right and left ventricle.

The protein localises to the cell membrane. Its function is as follows. Regulatory alpha-subunit of the voltage-gated potassium (Kv) channel which, when coassembled with KCNB1, can modulate the kinetics and conductance-voltage relationship. Modulates channel activity by shifting the threshold and the half-maximal activation to more negative values. Potassium channel subunit that does not form functional channels by itself. The protein is Voltage-gated potassium channel regulatory subunit KCNG2 of Rattus norvegicus (Rat).